We begin with the raw amino-acid sequence, 567 residues long: Laccase-3 (567 aa).

The first 24 residues, 1–24, serve as a signal peptide directing secretion; sequence MASSSSSRLLFLLSCSVLALLAGA. 2 consecutive Plastocyanin-like domains span residues 32–148 and 158–310; these read IVQE…PREN and REVP…YDCG. N-linked (GlcNAc...) asparagine glycosylation is present at N78. 4 residues coordinate Cu cation: H82, H84, H127, and H129. 7 N-linked (GlcNAc...) asparagine glycosylation sites follow: N148, N187, N203, N298, N330, N379, and N389. One can recognise a Plastocyanin-like 3 domain in the interval 415–551; it reads DFPAYPPVQF…AMAFLVEDGY (137 aa). The Cu cation site is built by H468, H471, H473, H530, C531, H532, and H536.

Belongs to the multicopper oxidase family. Requires Cu cation as cofactor.

It localises to the secreted. The protein localises to the extracellular space. It is found in the apoplast. The enzyme catalyses 4 hydroquinone + O2 = 4 benzosemiquinone + 2 H2O. Lignin degradation and detoxification of lignin-derived products. The polypeptide is Laccase-3 (LAC3) (Oryza sativa subsp. japonica (Rice)).